A 358-amino-acid chain; its full sequence is Alanine racemase (358 aa).

Lysine 35 functions as the Proton acceptor; specific for D-alanine in the catalytic mechanism. An N6-(pyridoxal phosphate)lysine modification is found at lysine 35. Arginine 130 provides a ligand contact to substrate. Tyrosine 255 (proton acceptor; specific for L-alanine) is an active-site residue. Methionine 303 serves as a coordination point for substrate.

This sequence belongs to the alanine racemase family. It depends on pyridoxal 5'-phosphate as a cofactor.

It catalyses the reaction L-alanine = D-alanine. It functions in the pathway amino-acid biosynthesis; D-alanine biosynthesis; D-alanine from L-alanine: step 1/1. In terms of biological role, catalyzes the interconversion of L-alanine and D-alanine. May also act on other amino acids. This Shewanella baltica (strain OS195) protein is Alanine racemase (alr).